We begin with the raw amino-acid sequence, 291 residues long: 3-hydroxy-5-phosphonooxypentane-2,4-dione thiolase (291 aa).

Lysine 203 acts as the Schiff-base intermediate with substrate in catalysis.

The protein belongs to the DeoC/FbaB aldolase family. As to quaternary structure, homodecamer.

The protein localises to the cytoplasm. It carries out the reaction dihydroxyacetone phosphate + acetyl-CoA = 3-hydroxy-2,4-dioxopentyl phosphate + CoA. Functionally, involved in the degradation of phospho-AI-2, thereby terminating induction of the lsr operon and closing the AI-2 signaling cycle. Catalyzes the transfer of an acetyl moiety from 3-hydroxy-5-phosphonooxypentane-2,4-dione to CoA to form glycerone phosphate and acetyl-CoA. This Photorhabdus laumondii subsp. laumondii (strain DSM 15139 / CIP 105565 / TT01) (Photorhabdus luminescens subsp. laumondii) protein is 3-hydroxy-5-phosphonooxypentane-2,4-dione thiolase.